The primary structure comprises 385 residues: uncharacterized protein (385 aa).

Belongs to the phage portal family. HK97 subfamily.

This is an uncharacterized protein from Rickettsia bellii (strain RML369-C).